The sequence spans 108 residues: Cell cycle protein GpsB (108 aa).

The stretch at leucine 32–alanine 69 forms a coiled coil.

The protein belongs to the GpsB family. As to quaternary structure, forms polymers through the coiled coil domains. Interacts with PBP1, MreC and EzrA.

It localises to the cytoplasm. Its function is as follows. Divisome component that associates with the complex late in its assembly, after the Z-ring is formed, and is dependent on DivIC and PBP2B for its recruitment to the divisome. Together with EzrA, is a key component of the system that regulates PBP1 localization during cell cycle progression. Its main role could be the removal of PBP1 from the cell pole after pole maturation is completed. Also contributes to the recruitment of PBP1 to the division complex. Not essential for septum formation. In Streptococcus pyogenes serotype M28 (strain MGAS6180), this protein is Cell cycle protein GpsB.